A 223-amino-acid polypeptide reads, in one-letter code: UPF0173 metal-dependent hydrolase THA_544 (223 aa).

The protein belongs to the UPF0173 family.

The protein is UPF0173 metal-dependent hydrolase THA_544 of Thermosipho africanus (strain TCF52B).